Here is a 740-residue protein sequence, read N- to C-terminus: Phosphoribosylformylglycinamidine synthase subunit PurL (740 aa).

Residue histidine 50 is part of the active site. 2 residues coordinate ATP: tyrosine 53 and lysine 92. Mg(2+) is bound at residue glutamate 94. Residues 95–98 (SHNH) and arginine 117 each bind substrate. The Proton acceptor role is filled by histidine 96. Position 118 (aspartate 118) interacts with Mg(2+). Glutamine 241 is a substrate binding site. Position 269 (aspartate 269) interacts with Mg(2+). 313-315 (ESQ) contributes to the substrate binding site. ATP-binding residues include aspartate 495 and glycine 532. Position 533 (asparagine 533) interacts with Mg(2+). Residue serine 535 participates in substrate binding.

The protein belongs to the FGAMS family. Monomer. Part of the FGAM synthase complex composed of 1 PurL, 1 PurQ and 2 PurS subunits.

The protein resides in the cytoplasm. The catalysed reaction is N(2)-formyl-N(1)-(5-phospho-beta-D-ribosyl)glycinamide + L-glutamine + ATP + H2O = 2-formamido-N(1)-(5-O-phospho-beta-D-ribosyl)acetamidine + L-glutamate + ADP + phosphate + H(+). It functions in the pathway purine metabolism; IMP biosynthesis via de novo pathway; 5-amino-1-(5-phospho-D-ribosyl)imidazole from N(2)-formyl-N(1)-(5-phospho-D-ribosyl)glycinamide: step 1/2. Functionally, part of the phosphoribosylformylglycinamidine synthase complex involved in the purines biosynthetic pathway. Catalyzes the ATP-dependent conversion of formylglycinamide ribonucleotide (FGAR) and glutamine to yield formylglycinamidine ribonucleotide (FGAM) and glutamate. The FGAM synthase complex is composed of three subunits. PurQ produces an ammonia molecule by converting glutamine to glutamate. PurL transfers the ammonia molecule to FGAR to form FGAM in an ATP-dependent manner. PurS interacts with PurQ and PurL and is thought to assist in the transfer of the ammonia molecule from PurQ to PurL. In Brucella canis (strain ATCC 23365 / NCTC 10854 / RM-666), this protein is Phosphoribosylformylglycinamidine synthase subunit PurL.